Here is a 701-residue protein sequence, read N- to C-terminus: Elongation factor G (701 aa).

Residues serine 8–threonine 290 form the tr-type G domain. GTP is bound by residues alanine 17–threonine 24, aspartate 88–histidine 92, and asparagine 142–aspartate 145.

It belongs to the TRAFAC class translation factor GTPase superfamily. Classic translation factor GTPase family. EF-G/EF-2 subfamily.

It localises to the cytoplasm. Functionally, catalyzes the GTP-dependent ribosomal translocation step during translation elongation. During this step, the ribosome changes from the pre-translocational (PRE) to the post-translocational (POST) state as the newly formed A-site-bound peptidyl-tRNA and P-site-bound deacylated tRNA move to the P and E sites, respectively. Catalyzes the coordinated movement of the two tRNA molecules, the mRNA and conformational changes in the ribosome. The polypeptide is Elongation factor G (Actinobacillus pleuropneumoniae serotype 5b (strain L20)).